The chain runs to 240 residues: Tubulin alpha chain (240 aa).

Asn-17 serves as a coordination point for GTP. Glu-43 is an active-site residue.

It belongs to the tubulin family. As to quaternary structure, dimer of alpha and beta chains. A typical microtubule is a hollow water-filled tube with an outer diameter of 25 nm and an inner diameter of 15 nM. Alpha-beta heterodimers associate head-to-tail to form protofilaments running lengthwise along the microtubule wall with the beta-tubulin subunit facing the microtubule plus end conferring a structural polarity. Microtubules usually have 13 protofilaments but different protofilament numbers can be found in some organisms and specialized cells. The cofactor is Mg(2+). Undergoes a tyrosination/detyrosination cycle, the cyclic removal and re-addition of a C-terminal tyrosine residue by the enzymes tubulin tyrosine carboxypeptidase (TTCP) and tubulin tyrosine ligase (TTL), respectively.

It is found in the cytoplasm. The protein resides in the cytoskeleton. It carries out the reaction GTP + H2O = GDP + phosphate + H(+). In terms of biological role, tubulin is the major constituent of microtubules, a cylinder consisting of laterally associated linear protofilaments composed of alpha- and beta-tubulin heterodimers. Microtubules grow by the addition of GTP-tubulin dimers to the microtubule end, where a stabilizing cap forms. Below the cap, tubulin dimers are in GDP-bound state, owing to GTPase activity of alpha-tubulin. The protein is Tubulin alpha chain of Octopus vulgaris (Common octopus).